The sequence spans 200 residues: Peptidyl-tRNA hydrolase (200 aa).

A tRNA-binding site is contributed by Tyr-15. His-20 functions as the Proton acceptor in the catalytic mechanism. Residues Tyr-66, Asn-68, and Asn-114 each coordinate tRNA.

The protein belongs to the PTH family. In terms of assembly, monomer.

It is found in the cytoplasm. The enzyme catalyses an N-acyl-L-alpha-aminoacyl-tRNA + H2O = an N-acyl-L-amino acid + a tRNA + H(+). Functionally, hydrolyzes ribosome-free peptidyl-tRNAs (with 1 or more amino acids incorporated), which drop off the ribosome during protein synthesis, or as a result of ribosome stalling. Its function is as follows. Catalyzes the release of premature peptidyl moieties from peptidyl-tRNA molecules trapped in stalled 50S ribosomal subunits, and thus maintains levels of free tRNAs and 50S ribosomes. The sequence is that of Peptidyl-tRNA hydrolase from Paraburkholderia xenovorans (strain LB400).